The sequence spans 399 residues: Phosphoglycerate kinase (399 aa).

Substrate contacts are provided by residues 22–24 (DFN), Arg38, 61–64 (HLGR), Arg120, and Arg153. ATP contacts are provided by residues Lys204, Glu326, and 352–355 (GGDT).

Belongs to the phosphoglycerate kinase family. In terms of assembly, monomer.

The protein resides in the cytoplasm. The enzyme catalyses (2R)-3-phosphoglycerate + ATP = (2R)-3-phospho-glyceroyl phosphate + ADP. The protein operates within carbohydrate degradation; glycolysis; pyruvate from D-glyceraldehyde 3-phosphate: step 2/5. The protein is Phosphoglycerate kinase of Geotalea uraniireducens (strain Rf4) (Geobacter uraniireducens).